The primary structure comprises 267 residues: NH(3)-dependent NAD(+) synthetase (267 aa).

G38 to S45 contributes to the ATP binding site. Mg(2+) is bound at residue D44. A deamido-NAD(+)-binding site is contributed by R123. T143 contacts ATP. E148 provides a ligand contact to Mg(2+). Residues K156 and D163 each contribute to the deamido-NAD(+) site. Residues K172 and S193 each contribute to the ATP site. H250–K251 contributes to the deamido-NAD(+) binding site.

This sequence belongs to the NAD synthetase family. In terms of assembly, homodimer.

It carries out the reaction deamido-NAD(+) + NH4(+) + ATP = AMP + diphosphate + NAD(+) + H(+). It participates in cofactor biosynthesis; NAD(+) biosynthesis; NAD(+) from deamido-NAD(+) (ammonia route): step 1/1. Functionally, catalyzes the ATP-dependent amidation of deamido-NAD to form NAD. Uses ammonia as a nitrogen source. The polypeptide is NH(3)-dependent NAD(+) synthetase (Pyrobaculum aerophilum (strain ATCC 51768 / DSM 7523 / JCM 9630 / CIP 104966 / NBRC 100827 / IM2)).